We begin with the raw amino-acid sequence, 321 residues long: MKTIGILTSGGDAPGMNAAIRAVVRTGIYYGLKVKGIMRGYAGLVEDEVIDLNLSSVGDILQKGGTILRTARCEEFKKKEVRKKAYETLQKHGIEGLVVIGGDGSFRGAQLLSEEWNVNTIGIPGTIDNDIPCTDYTIGFDTACNTVIDAINKIRDTATSHERANIIEVMGRNAGYIALYAGLAGGAEMIILPEVEWSIDELCDKITYGIKRGKLHHIIVLAEGVMSAPELAKMIKERLPKLDLRYTILGHIQRGGAPTVMDRVLASQMGARAVELLLENKTKRIISIRNNQIVDDDIDEALSMKKEFNRKLYELSKILSI.

Glycine 11 serves as a coordination point for ATP. ADP is bound at residue 21 to 25 (RAVVR). Residues 72-73 (RC) and 102-105 (GDGS) each bind ATP. Aspartate 103 contributes to the Mg(2+) binding site. Position 126 to 128 (126 to 128 (TID)) interacts with substrate. The active-site Proton acceptor is aspartate 128. Arginine 155 is an ADP binding site. Substrate-binding positions include arginine 163 and 170–172 (MGR). Residues 186–188 (GAE), arginine 212, and 214–216 (KLH) contribute to the ADP site. Residues glutamate 223, arginine 245, and 251–254 (HIQR) contribute to the substrate site.

This sequence belongs to the phosphofructokinase type A (PFKA) family. ATP-dependent PFK group I subfamily. Prokaryotic clade 'B1' sub-subfamily. As to quaternary structure, homotetramer. It depends on Mg(2+) as a cofactor.

The protein localises to the cytoplasm. It catalyses the reaction beta-D-fructose 6-phosphate + ATP = beta-D-fructose 1,6-bisphosphate + ADP + H(+). The protein operates within carbohydrate degradation; glycolysis; D-glyceraldehyde 3-phosphate and glycerone phosphate from D-glucose: step 3/4. Its activity is regulated as follows. Allosterically activated by ADP and other diphosphonucleosides, and allosterically inhibited by phosphoenolpyruvate. Functionally, catalyzes the phosphorylation of D-fructose 6-phosphate to fructose 1,6-bisphosphate by ATP, the first committing step of glycolysis. The sequence is that of ATP-dependent 6-phosphofructokinase from Thermoanaerobacter pseudethanolicus (strain ATCC 33223 / 39E) (Clostridium thermohydrosulfuricum).